The following is a 519-amino-acid chain: Transcription factor STP1 (519 aa).

Positions 16 to 35 are i; it reads IPGKIYAFFRELVSGVIISK. Residues 47-61 show a composition bias toward basic and acidic residues; sequence ATKEEGKDAADEEKT. 2 disordered regions span residues 47–69 and 115–150; these read ATKEEGKDAADEEKTTTSLFPES and LLGSRPEQDTGAPIKMSTGVTSSPLSPSGSTPEHST. The tract at residues 65 to 97 is II; it reads LFPESNNIDRSLNGGCSVIPCSMDVSDLNTPIS. Positions 131-146 are enriched in low complexity; the sequence is STGVTSSPLSPSGSTP. A C2H2-type 1 zinc finger spans residues 160-182; sequence FICHYCDATFRIRGYLTRHIKKH. The C2H2-type 2; atypical zinc-finger motif lies at 188–223; the sequence is YHCPFFNSATPPDLRCHNSGGFSRRDTYKTHLKARH. The segment at 240 to 265 adopts a C2H2-type 3; atypical zinc-finger fold; the sequence is GHCAQCGEYFSTIENFVENHIESGDC. Positions 357 to 382 are disordered; the sequence is IKKKQQQVSGSTVTTPEVATQNNQEV. Residues 364-381 show a composition bias toward polar residues; that stretch reads VSGSTVTTPEVATQNNQE.

In terms of assembly, interacts (via Region II) with SSY5; protease component of the SPS-sensor. In terms of processing, phosphorylated by casein kinase I. Phosphorylation is not dependent on the extracellular amino acid levels, but is a prerequisite for proteolytic processing. Activated by the amino acid-induced proteolytic removal of an N-terminal inhibitory domain by serine protease SSY5, an intrinsic component of the SPS-sensor. Processing requires at least 2 components of the SCF(GRR1) ubiquitin ligase complex, namely the F-box protein GRR1 and the E2 enzyme CDC34, but does not depend on the proteasome. Processing is negatively regulated by the protein phosphatase 2A regulatory subunit RTS1.

It localises to the cell membrane. Its subcellular location is the nucleus. Functionally, transcription factor involved in the regulation of gene expression in response to extracellular amino acid levels. Synthesized as latent cytoplasmic precursor, which, upon a signal initiated by the plasma membrane SPS (SSY1-PTR3-SSY5) amino acid sensor system, becomes proteolytically activated and relocates to the nucleus, where it induces the expression of SPS-sensor-regulated genes, including the amino-acid permeases AGP1, BAP2, BAP3 and GNP1. Binding to promoters is facilitated by DAL81. Involved in the repression of genes subject to nitrogen catabolite repression and genes involved in stress response. Negatively regulated by inner nuclear membrane proteins ASI1, ASI2 and ASI3, which prevent unprocessed precursor forms that escape cytoplasmic anchoring from inducing SPS-sensor-regulated genes. May be involved in pre-tRNA splicing. This is Transcription factor STP1 (STP1) from Saccharomyces cerevisiae (strain RM11-1a) (Baker's yeast).